Here is a 220-residue protein sequence, read N- to C-terminus: ATP phosphoribosyltransferase (220 aa).

This sequence belongs to the ATP phosphoribosyltransferase family. Short subfamily. As to quaternary structure, heteromultimer composed of HisG and HisZ subunits.

Its subcellular location is the cytoplasm. It carries out the reaction 1-(5-phospho-beta-D-ribosyl)-ATP + diphosphate = 5-phospho-alpha-D-ribose 1-diphosphate + ATP. Its pathway is amino-acid biosynthesis; L-histidine biosynthesis; L-histidine from 5-phospho-alpha-D-ribose 1-diphosphate: step 1/9. Its function is as follows. Catalyzes the condensation of ATP and 5-phosphoribose 1-diphosphate to form N'-(5'-phosphoribosyl)-ATP (PR-ATP). Has a crucial role in the pathway because the rate of histidine biosynthesis seems to be controlled primarily by regulation of HisG enzymatic activity. The protein is ATP phosphoribosyltransferase of Janthinobacterium sp. (strain Marseille) (Minibacterium massiliensis).